The primary structure comprises 155 residues: Ribosomal RNA large subunit methyltransferase H (155 aa).

S-adenosyl-L-methionine-binding positions include Leu73, Gly104, and 123 to 128; that span reads LSALTL.

The protein belongs to the RNA methyltransferase RlmH family. In terms of assembly, homodimer.

The protein localises to the cytoplasm. It carries out the reaction pseudouridine(1915) in 23S rRNA + S-adenosyl-L-methionine = N(3)-methylpseudouridine(1915) in 23S rRNA + S-adenosyl-L-homocysteine + H(+). Specifically methylates the pseudouridine at position 1915 (m3Psi1915) in 23S rRNA. This is Ribosomal RNA large subunit methyltransferase H from Chromohalobacter salexigens (strain ATCC BAA-138 / DSM 3043 / CIP 106854 / NCIMB 13768 / 1H11).